The primary structure comprises 435 residues: NADH-quinone oxidoreductase subunit D (435 aa).

The protein belongs to the complex I 49 kDa subunit family. In terms of assembly, NDH-1 is composed of 14 different subunits. Subunits NuoB, C, D, E, F, and G constitute the peripheral sector of the complex.

The protein resides in the cell membrane. The catalysed reaction is a quinone + NADH + 5 H(+)(in) = a quinol + NAD(+) + 4 H(+)(out). Functionally, NDH-1 shuttles electrons from NADH, via FMN and iron-sulfur (Fe-S) centers, to quinones in the respiratory chain. The immediate electron acceptor for the enzyme in this species is believed to be ubiquinone. Couples the redox reaction to proton translocation (for every two electrons transferred, four hydrogen ions are translocated across the cytoplasmic membrane), and thus conserves the redox energy in a proton gradient. This Stenotrophomonas maltophilia (strain K279a) protein is NADH-quinone oxidoreductase subunit D.